A 362-amino-acid polypeptide reads, in one-letter code: Alanine racemase (362 aa).

Lysine 33 (proton acceptor; specific for D-alanine) is an active-site residue. Lysine 33 is modified (N6-(pyridoxal phosphate)lysine). Arginine 129 is a binding site for substrate. Tyrosine 254 (proton acceptor; specific for L-alanine) is an active-site residue. Methionine 302 provides a ligand contact to substrate.

This sequence belongs to the alanine racemase family. Pyridoxal 5'-phosphate serves as cofactor.

It carries out the reaction L-alanine = D-alanine. It participates in amino-acid biosynthesis; D-alanine biosynthesis; D-alanine from L-alanine: step 1/1. In terms of biological role, catalyzes the interconversion of L-alanine and D-alanine. May also act on other amino acids. This Xylella fastidiosa (strain 9a5c) protein is Alanine racemase (alr).